A 348-amino-acid chain; its full sequence is Probable protein phosphatase 2C 35 (348 aa).

Over residues arginine 11–proline 24 the composition is skewed to low complexity. The disordered stretch occupies residues arginine 11 to glycine 40. The PPM-type phosphatase domain maps to valine 52–isoleucine 342. 4 residues coordinate Mn(2+): aspartate 93, glycine 94, aspartate 289, and aspartate 333.

The protein belongs to the PP2C family. Mg(2+) serves as cofactor. Requires Mn(2+) as cofactor.

It catalyses the reaction O-phospho-L-seryl-[protein] + H2O = L-seryl-[protein] + phosphate. The enzyme catalyses O-phospho-L-threonyl-[protein] + H2O = L-threonyl-[protein] + phosphate. The protein is Probable protein phosphatase 2C 35 of Arabidopsis thaliana (Mouse-ear cress).